Here is a 150-residue protein sequence, read N- to C-terminus: Small ribosomal subunit protein uS9 (150 aa).

This sequence belongs to the universal ribosomal protein uS9 family.

This Mycolicibacterium smegmatis (strain ATCC 700084 / mc(2)155) (Mycobacterium smegmatis) protein is Small ribosomal subunit protein uS9.